The primary structure comprises 473 residues: Chaperone SurA (473 aa).

Positions 1-36 are cleaved as a signal peptide; that stretch reads MTNDRLFAGIARVLSVRPLAAALALLLTLPLIGVQA. 2 consecutive PpiC domains span residues 214–315 and 326–425; these read SLAL…KVIE and ITQT…QVLE.

It is found in the periplasm. It carries out the reaction [protein]-peptidylproline (omega=180) = [protein]-peptidylproline (omega=0). In terms of biological role, chaperone involved in the correct folding and assembly of outer membrane proteins. Recognizes specific patterns of aromatic residues and the orientation of their side chains, which are found more frequently in integral outer membrane proteins. May act in both early periplasmic and late outer membrane-associated steps of protein maturation. In Polaromonas sp. (strain JS666 / ATCC BAA-500), this protein is Chaperone SurA.